We begin with the raw amino-acid sequence, 312 residues long: Porphobilinogen deaminase (312 aa).

Cys241 carries the S-(dipyrrolylmethanemethyl)cysteine modification.

It belongs to the HMBS family. In terms of assembly, monomer. Dipyrromethane is required as a cofactor.

It carries out the reaction 4 porphobilinogen + H2O = hydroxymethylbilane + 4 NH4(+). The protein operates within porphyrin-containing compound metabolism; protoporphyrin-IX biosynthesis; coproporphyrinogen-III from 5-aminolevulinate: step 2/4. Functionally, tetrapolymerization of the monopyrrole PBG into the hydroxymethylbilane pre-uroporphyrinogen in several discrete steps. This chain is Porphobilinogen deaminase, found in Pelotomaculum thermopropionicum (strain DSM 13744 / JCM 10971 / SI).